A 275-amino-acid chain; its full sequence is Large ribosomal subunit protein uL2 (275 aa).

Residues 212–275 (NRHRGIRPQT…DKLIISRRKK (64 aa)) form a disordered region. Residues 257–275 (YKTRRKKPSDKLIISRRKK) are compositionally biased toward basic residues.

The protein belongs to the universal ribosomal protein uL2 family. Part of the 50S ribosomal subunit. Forms a bridge to the 30S subunit in the 70S ribosome.

One of the primary rRNA binding proteins. Required for association of the 30S and 50S subunits to form the 70S ribosome, for tRNA binding and peptide bond formation. It has been suggested to have peptidyltransferase activity; this is somewhat controversial. Makes several contacts with the 16S rRNA in the 70S ribosome. In Nitratiruptor sp. (strain SB155-2), this protein is Large ribosomal subunit protein uL2.